Reading from the N-terminus, the 303-residue chain is Ribonuclease Z (303 aa).

Zn(2+) contacts are provided by histidine 61, histidine 63, aspartate 65, histidine 66, histidine 138, aspartate 206, and histidine 265. Residue aspartate 65 is the Proton acceptor of the active site.

Belongs to the RNase Z family. As to quaternary structure, homodimer. Zn(2+) is required as a cofactor.

It carries out the reaction Endonucleolytic cleavage of RNA, removing extra 3' nucleotides from tRNA precursor, generating 3' termini of tRNAs. A 3'-hydroxy group is left at the tRNA terminus and a 5'-phosphoryl group is left at the trailer molecule.. Zinc phosphodiesterase, which displays some tRNA 3'-processing endonuclease activity. Probably involved in tRNA maturation, by removing a 3'-trailer from precursor tRNA. In Agathobacter rectalis (strain ATCC 33656 / DSM 3377 / JCM 17463 / KCTC 5835 / VPI 0990) (Eubacterium rectale), this protein is Ribonuclease Z.